Reading from the N-terminus, the 84-residue chain is MKVKIKCWNGVATWLWVANDENCGICRMAFNGCCPDCKVPGDDCPLVWGQCSHCFHMHCILKWLNAQQVQQHCPMCRQEWKFKE.

The Zn(2+) site is built by C23, C26, C34, C37, C44, C51, H53, H56, H58, C59, C73, and C76. Residues 34 to 77 (CPDCKVPGDDCPLVWGQCSHCFHMHCILKWLNAQQVQQHCPMCR) form an RING-type zinc finger.

The protein belongs to the RING-box family. As to quaternary structure, the mammalian APC/C is composed at least of 14 distinct subunits ANAPC1, ANAPC2, CDC27/APC3, ANAPC4, ANAPC5, CDC16/APC6, ANAPC7, CDC23/APC8, ANAPC10, ANAPC11, CDC26/APC12, ANAPC13, ANAPC15 and ANAPC16 that assemble into a complex of at least 19 chains with a combined molecular mass of around 1.2 MDa; APC/C interacts with FZR1 and FBXO5. Interacts with the cullin domain of ANAPC2. Interacts with UBE2D2. Auto-ubiquitinated.

It is found in the cytoplasm. It localises to the nucleus. It participates in protein modification; protein ubiquitination. Functionally, together with the cullin protein ANAPC2, constitutes the catalytic component of the anaphase promoting complex/cyclosome (APC/C), a cell cycle-regulated E3 ubiquitin ligase that controls progression through mitosis and the G1 phase of the cell cycle. The APC/C complex acts by mediating ubiquitination and subsequent degradation of target proteins: it mainly mediates the formation of 'Lys-11'-linked polyubiquitin chains and, to a lower extent, the formation of 'Lys-48'- and 'Lys-63'-linked polyubiquitin chains. The APC/C complex catalyzes assembly of branched 'Lys-11'-/'Lys-48'-linked branched ubiquitin chains on target proteins. May recruit the E2 ubiquitin-conjugating enzymes to the complex. The sequence is that of Anaphase-promoting complex subunit 11 (Anapc11) from Mus musculus (Mouse).